Consider the following 264-residue polypeptide: Thymidylate synthase (264 aa).

Arg21 serves as a coordination point for dUMP. His51 lines the (6R)-5,10-methylene-5,6,7,8-tetrahydrofolate pocket. 126 to 127 (RR) contributes to the dUMP binding site. The active-site Nucleophile is Cys146. Residues 166 to 169 (RSCD), Asn177, and 207 to 209 (HLY) contribute to the dUMP site. Asp169 is a (6R)-5,10-methylene-5,6,7,8-tetrahydrofolate binding site. Ala263 contributes to the (6R)-5,10-methylene-5,6,7,8-tetrahydrofolate binding site.

This sequence belongs to the thymidylate synthase family. Bacterial-type ThyA subfamily. In terms of assembly, homodimer.

It localises to the cytoplasm. The enzyme catalyses dUMP + (6R)-5,10-methylene-5,6,7,8-tetrahydrofolate = 7,8-dihydrofolate + dTMP. It participates in pyrimidine metabolism; dTTP biosynthesis. Functionally, catalyzes the reductive methylation of 2'-deoxyuridine-5'-monophosphate (dUMP) to 2'-deoxythymidine-5'-monophosphate (dTMP) while utilizing 5,10-methylenetetrahydrofolate (mTHF) as the methyl donor and reductant in the reaction, yielding dihydrofolate (DHF) as a by-product. This enzymatic reaction provides an intracellular de novo source of dTMP, an essential precursor for DNA biosynthesis. In Xenorhabdus nematophila (strain ATCC 19061 / DSM 3370 / CCUG 14189 / LMG 1036 / NCIMB 9965 / AN6), this protein is Thymidylate synthase.